The following is a 93-amino-acid chain: Putative regulatory protein Fnod_1678 (93 aa).

It belongs to the RemA family.

This is Putative regulatory protein Fnod_1678 from Fervidobacterium nodosum (strain ATCC 35602 / DSM 5306 / Rt17-B1).